We begin with the raw amino-acid sequence, 121 residues long: Small ribosomal subunit protein uS13 (121 aa).

The tract at residues 97–121 (VRGQRTRTNARTRRGARKTVAGKKK) is disordered. The segment covering 100-121 (QRTRTNARTRRGARKTVAGKKK) has biased composition (basic residues).

Belongs to the universal ribosomal protein uS13 family. As to quaternary structure, part of the 30S ribosomal subunit. Forms a loose heterodimer with protein S19. Forms two bridges to the 50S subunit in the 70S ribosome.

Functionally, located at the top of the head of the 30S subunit, it contacts several helices of the 16S rRNA. In the 70S ribosome it contacts the 23S rRNA (bridge B1a) and protein L5 of the 50S subunit (bridge B1b), connecting the 2 subunits; these bridges are implicated in subunit movement. Contacts the tRNAs in the A and P-sites. The sequence is that of Small ribosomal subunit protein uS13 from Synechococcus sp. (strain WH7803).